The chain runs to 219 residues: Guanylate kinase (219 aa).

The Guanylate kinase-like domain occupies 15 to 194 (GLMFVLSSPS…AFAEVQSILK (180 aa)). 22 to 29 (SPSGAGKT) lines the ATP pocket.

The protein belongs to the guanylate kinase family.

Its subcellular location is the cytoplasm. The enzyme catalyses GMP + ATP = GDP + ADP. Its function is as follows. Essential for recycling GMP and indirectly, cGMP. The chain is Guanylate kinase from Nitrobacter winogradskyi (strain ATCC 25391 / DSM 10237 / CIP 104748 / NCIMB 11846 / Nb-255).